Consider the following 396-residue polypeptide: Tryptophan synthase beta chain (396 aa).

The residue at position 86 (lysine 86) is an N6-(pyridoxal phosphate)lysine.

The protein belongs to the TrpB family. As to quaternary structure, tetramer of two alpha and two beta chains. It depends on pyridoxal 5'-phosphate as a cofactor.

It carries out the reaction (1S,2R)-1-C-(indol-3-yl)glycerol 3-phosphate + L-serine = D-glyceraldehyde 3-phosphate + L-tryptophan + H2O. It participates in amino-acid biosynthesis; L-tryptophan biosynthesis; L-tryptophan from chorismate: step 5/5. Its function is as follows. The beta subunit is responsible for the synthesis of L-tryptophan from indole and L-serine. This Sodalis glossinidius (strain morsitans) protein is Tryptophan synthase beta chain.